Reading from the N-terminus, the 74-residue chain is UPF0741 protein BcerKBAB4_5177 (74 aa).

Belongs to the UPF0741 family.

This Bacillus mycoides (strain KBAB4) (Bacillus weihenstephanensis) protein is UPF0741 protein BcerKBAB4_5177.